The following is an 84-amino-acid chain: MATGTDQAVGFGLVAVSLIIFTYYTTWVILLPFIDSQHVIHKYFLPRAYAVLLPLAAGLLLLLFVGLFITYVMLKSQKITKKAQ.

2 consecutive transmembrane segments (helical) span residues 11 to 31 and 49 to 69; these read FGLV…VILL and YAVL…GLFI.

This sequence belongs to the DPM2 family. Component of the dolichol-phosphate mannose (DPM) synthase complex composed of DPM1, DPM2 and DPM3; in the complex interacts directly with DPM3. Component of the glycosylphosphatidylinositol-N-acetylglucosaminyltransferase (GPI-GnT) complex composed at least by PIGA, PIGC, PIGH, PIGP, PIGQ, PIGY and DPM2. Interacts with PIGA, PIGC and PIGQ.

The protein resides in the endoplasmic reticulum membrane. The protein operates within protein modification; protein glycosylation. In terms of biological role, regulates the biosynthesis of dolichol phosphate-mannose. Regulatory subunit of the dolichol-phosphate mannose (DPM) synthase complex; essential for the ER localization and stable expression of DPM1. Part of the glycosylphosphatidylinositol-N-acetylglucosaminyltransferase (GPI-GnT) complex that catalyzes the transfer of N-acetylglucosamine from UDP-N-acetylglucosamine to phosphatidylinositol and participates in the first step of GPI biosynthesis. May act by regulating the GPI-GNT complex. The chain is Dolichol phosphate-mannose biosynthesis regulatory protein from Mus musculus (Mouse).